The following is a 120-amino-acid chain: Large ribosomal subunit protein uL29 (120 aa).

Belongs to the universal ribosomal protein uL29 family. As to quaternary structure, component of the large ribosomal subunit. Mature ribosomes consist of a small (40S) and a large (60S) subunit. The 40S subunit contains about 32 different proteins and 1 molecule of RNA (18S). The 60S subunit contains 45 different proteins and 3 molecules of RNA (25S, 5.8S and 5S).

Its subcellular location is the cytoplasm. Component of the ribosome, a large ribonucleoprotein complex responsible for the synthesis of proteins in the cell. The small ribosomal subunit (SSU) binds messenger RNAs (mRNAs) and translates the encoded message by selecting cognate aminoacyl-transfer RNA (tRNA) molecules. The large subunit (LSU) contains the ribosomal catalytic site termed the peptidyl transferase center (PTC), which catalyzes the formation of peptide bonds, thereby polymerizing the amino acids delivered by tRNAs into a polypeptide chain. The nascent polypeptides leave the ribosome through a tunnel in the LSU and interact with protein factors that function in enzymatic processing, targeting, and the membrane insertion of nascent chains at the exit of the ribosomal tunnel. The polypeptide is Large ribosomal subunit protein uL29 (Candida albicans (strain SC5314 / ATCC MYA-2876) (Yeast)).